A 118-amino-acid chain; its full sequence is Co-chaperonin GroES (118 aa).

The protein belongs to the GroES chaperonin family. In terms of assembly, heptamer of 7 subunits arranged in a ring. Interacts with the chaperonin GroEL.

It localises to the cytoplasm. Together with the chaperonin GroEL, plays an essential role in assisting protein folding. The GroEL-GroES system forms a nano-cage that allows encapsulation of the non-native substrate proteins and provides a physical environment optimized to promote and accelerate protein folding. GroES binds to the apical surface of the GroEL ring, thereby capping the opening of the GroEL channel. This Helicobacter pylori (strain G27) protein is Co-chaperonin GroES.